Here is a 331-residue protein sequence, read N- to C-terminus: Phosphate acyltransferase (331 aa).

This sequence belongs to the PlsX family. In terms of assembly, homodimer. Probably interacts with PlsY.

It is found in the cytoplasm. The enzyme catalyses a fatty acyl-[ACP] + phosphate = an acyl phosphate + holo-[ACP]. Its pathway is lipid metabolism; phospholipid metabolism. In terms of biological role, catalyzes the reversible formation of acyl-phosphate (acyl-PO(4)) from acyl-[acyl-carrier-protein] (acyl-ACP). This enzyme utilizes acyl-ACP as fatty acyl donor, but not acyl-CoA. The polypeptide is Phosphate acyltransferase (Exiguobacterium sibiricum (strain DSM 17290 / CCUG 55495 / CIP 109462 / JCM 13490 / 255-15)).